Consider the following 419-residue polypeptide: G protein-activated inward rectifier potassium channel 4 (419 aa).

Residues 1 to 86 are Cytoplasmic-facing; that stretch reads MAGDSRNAMN…LFTTLVDLKW (86 aa). At Ser-5 the chain carries Phosphoserine. Residues 87-111 traverse the membrane as a helical segment; that stretch reads RFNLLVFTMVYTITWLFFGFIWWLI. Topologically, residues 112–135 are extracellular; sequence AYVRGDLDHVGDQEWIPCVENLSG. An intramembrane region (helical; Pore-forming) is located at residues 136 to 147; that stretch reads FVSAFLFSIETE. Residues 148–154 constitute an intramembrane region (pore-forming); the sequence is TTIGYGF. The Selectivity filter signature appears at 149 to 154; sequence TIGYGF. The Extracellular segment spans residues 155 to 163; sequence RVITEKCPE. A helical transmembrane segment spans residues 164–185; it reads GIILLLVQAILGSIVNAFMVGC. Over 186–419 the chain is Cytoplasmic; it reads MFVKISQPKK…SVSQATRGSM (234 aa). A disordered region spans residues 388–419; it reads GCAEAGNEAEAEKDEEGEPNGLSVSQATRGSM. A compositionally biased stretch (acidic residues) spans 394–405; that stretch reads NEAEAEKDEEGE. Residues 409 to 419 show a composition bias toward polar residues; that stretch reads LSVSQATRGSM.

The protein belongs to the inward rectifier-type potassium channel (TC 1.A.2.1) family. KCNJ5 subfamily. As to quaternary structure, associates with KCNJ3/GIRK1 to form a G-protein-activated heteromultimer pore-forming unit. Associates with KCNJ6/GRIK2 to form a G-protein-activated heteromultimer pore-forming unit. As to expression, expressed in the heart.

It localises to the membrane. It catalyses the reaction K(+)(in) = K(+)(out). Its activity is regulated as follows. Heteromultimer composed of KCNJ3/GIRK1 and KCNJ5/GIRK4 is activated by phosphatidylinositol 4,5 biphosphate (PtdIns(4,5)P2). Its function is as follows. Inward rectifier potassium channels are characterized by a greater tendency to allow potassium to flow into the cell rather than out of it. Their voltage dependence is regulated by the concentration of extracellular potassium; as external potassium is raised, the voltage range of the channel opening shifts to more positive voltages. The inward rectification is mainly due to the blockage of outward current by internal magnesium. Can be blocked by external barium. This potassium channel is controlled by G proteins. Forms a functional channel in association with KCNJ3/GIRK1. In Mus musculus (Mouse), this protein is G protein-activated inward rectifier potassium channel 4 (Kcnj5).